Here is a 1061-residue protein sequence, read N- to C-terminus: Carbamoyl phosphate synthase large chain (1061 aa).

The carboxyphosphate synthetic domain stretch occupies residues 1–401; the sequence is MPKRTDVHKI…ALQKAVRSLE (401 aa). 12 residues coordinate ATP: R129, R169, G175, G176, K208, I210, E215, G241, I242, H243, Q284, and E298. The region spanning 133 to 327 is the ATP-grasp 1 domain; sequence KDLMQELNEP…IAKLAAKIAV (195 aa). Residues Q284, E298, and N300 each contribute to the Mg(2+) site. Positions 284, 298, and 300 each coordinate Mn(2+). An oligomerization domain region spans residues 402 to 546; the sequence is IDEKDLISAK…YSSYDLENES (145 aa). Residues 547–929 are carbamoyl phosphate synthetic domain; sequence KKSDKKSVLV…ALYKAFTGAK (383 aa). In terms of domain architecture, ATP-grasp 2 spans 671–861; that stretch reads DQTIKNLGLK…MAQVATRVIL (191 aa). The ATP site is built by R707, A746, L748, E752, G777, V778, H779, S780, Q820, and E832. Mg(2+) contacts are provided by Q820, E832, and N834. The Mn(2+) site is built by Q820, E832, and N834. The MGS-like domain maps to 930–1061; that stretch reads MELPDNGNVL…ENRSFATNSL (132 aa). Residues 930–1061 are allosteric domain; sequence MELPDNGNVL…ENRSFATNSL (132 aa).

It belongs to the CarB family. As to quaternary structure, composed of two chains; the small (or glutamine) chain promotes the hydrolysis of glutamine to ammonia, which is used by the large (or ammonia) chain to synthesize carbamoyl phosphate. Tetramer of heterodimers (alpha,beta)4. Mg(2+) is required as a cofactor. The cofactor is Mn(2+).

It carries out the reaction hydrogencarbonate + L-glutamine + 2 ATP + H2O = carbamoyl phosphate + L-glutamate + 2 ADP + phosphate + 2 H(+). The enzyme catalyses hydrogencarbonate + NH4(+) + 2 ATP = carbamoyl phosphate + 2 ADP + phosphate + 2 H(+). It functions in the pathway amino-acid biosynthesis; L-arginine biosynthesis; carbamoyl phosphate from bicarbonate: step 1/1. Its pathway is pyrimidine metabolism; UMP biosynthesis via de novo pathway; (S)-dihydroorotate from bicarbonate: step 1/3. In terms of biological role, large subunit of the glutamine-dependent carbamoyl phosphate synthetase (CPSase). CPSase catalyzes the formation of carbamoyl phosphate from the ammonia moiety of glutamine, carbonate, and phosphate donated by ATP, constituting the first step of 2 biosynthetic pathways, one leading to arginine and/or urea and the other to pyrimidine nucleotides. The large subunit (synthetase) binds the substrates ammonia (free or transferred from glutamine from the small subunit), hydrogencarbonate and ATP and carries out an ATP-coupled ligase reaction, activating hydrogencarbonate by forming carboxy phosphate which reacts with ammonia to form carbamoyl phosphate. The protein is Carbamoyl phosphate synthase large chain of Ligilactobacillus salivarius (strain UCC118) (Lactobacillus salivarius).